The chain runs to 356 residues: Ornithine cyclodeaminase (356 aa).

The L-ornithine site is built by Arg-53 and Lys-77. NAD(+)-binding positions include Thr-92, Arg-120, 147–148 (AQ), Asp-169, Thr-209, 232–235 (VGGD), Lys-239, and Ser-300. Residue Arg-120 coordinates L-ornithine. Residue Asp-235 coordinates L-ornithine. Asp-235 acts as the Proton donor/acceptor in catalysis. Val-301 serves as a coordination point for L-ornithine.

It belongs to the ornithine cyclodeaminase/mu-crystallin family. The cofactor is NAD(+).

The enzyme catalyses L-ornithine = L-proline + NH4(+). It functions in the pathway amino-acid biosynthesis; L-proline biosynthesis; L-proline from L-ornithine: step 1/1. Its activity is regulated as follows. Is inhibited by L-proline and L-lysine. Is not activated by small concentrations of L-arginine, and is even inhibited by about 50% at 0.5 mM L-arginine. Functionally, catalyzes the conversion of L-ornithine into L-proline with release of ammonia. Is involved in the utilization of octopine, a catabolic pathway that proceeds through L-arginine and L-ornithine to L-proline. Octopine is a predominant opine in plant cells transformed with Ti plasmid pTiAch5. The chain is Ornithine cyclodeaminase from Agrobacterium tumefaciens (strain Ach5).